The chain runs to 353 residues: Pleckstrin-2 (353 aa).

Residue M1 is modified to N-acetylmethionine. The region spanning G4 to H104 is the PH 1 domain. S120 bears the Phosphoserine mark. One can recognise a DEP domain in the interval S139–E225. The region spanning T247–T353 is the PH 2 domain.

Its subcellular location is the cell projection. The protein resides in the lamellipodium membrane. It is found in the cytoplasm. The protein localises to the cytoskeleton. In terms of biological role, may help orchestrate cytoskeletal arrangement. Contribute to lamellipodia formation. The polypeptide is Pleckstrin-2 (PLEK2) (Homo sapiens (Human)).